The primary structure comprises 150 residues: Non-specific lipid transfer protein GPI-anchored 7 (150 aa).

A signal peptide spans 1-25; sequence MTKTMMIFAAAMTVMALLLVPTIEA. 4 disulfides stabilise this stretch: Cys-29–Cys-66, Cys-36–Cys-50, Cys-51–Cys-92, and Cys-64–Cys-101. 3 N-linked (GlcNAc...) asparagine glycosylation sites follow: Asn-41, Asn-79, and Asn-93. The interval 103–125 is disordered; the sequence is AKGAPSPKASLPPPAPAGNTKKD. Asp-125 carries the GPI-anchor amidated aspartate lipid modification. The propeptide at 126–150 is removed in mature form; sequence AGAGNKLAGYGVTTVILSLISSIFF.

The protein belongs to the plant LTP family. As to expression, up-regulated in the epidermis of stems.

The protein localises to the cell membrane. In terms of biological role, probable lipid transfer protein. The sequence is that of Non-specific lipid transfer protein GPI-anchored 7 from Arabidopsis thaliana (Mouse-ear cress).